The chain runs to 473 residues: 3-isopropylmalate dehydratase large subunit (473 aa).

Positions 348, 408, and 411 each coordinate [4Fe-4S] cluster. The tract at residues 421-440 (GDEASASSSNRNFIGRQGSK) is disordered.

This sequence belongs to the aconitase/IPM isomerase family. LeuC type 1 subfamily. In terms of assembly, heterodimer of LeuC and LeuD. [4Fe-4S] cluster is required as a cofactor.

It carries out the reaction (2R,3S)-3-isopropylmalate = (2S)-2-isopropylmalate. It participates in amino-acid biosynthesis; L-leucine biosynthesis; L-leucine from 3-methyl-2-oxobutanoate: step 2/4. Functionally, catalyzes the isomerization between 2-isopropylmalate and 3-isopropylmalate, via the formation of 2-isopropylmaleate. This chain is 3-isopropylmalate dehydratase large subunit, found in Haloferax volcanii (strain ATCC 29605 / DSM 3757 / JCM 8879 / NBRC 14742 / NCIMB 2012 / VKM B-1768 / DS2) (Halobacterium volcanii).